A 900-amino-acid chain; its full sequence is Nonribosomal peptide synthetase AMT10 (900 aa).

The adenylation stretch occupies residues 284 to 686 (KQAQQNPAAM…ARRNGYIKLR (403 aa)). The region spanning 824–900 (ELQSDMERYL…QMARNCSLLD (77 aa)) is the Carrier domain. Ser861 carries the O-(pantetheine 4'-phosphoryl)serine modification.

It belongs to the NRP synthetase family.

It functions in the pathway mycotoxin biosynthesis. Its function is as follows. Nonribosomal peptide synthetase; part of the gene clusters that mediate the biosynthesis of AM-toxins, host-selective toxins (HSTs) causing Alternaria blotch on apple, a worldwide distributed disease. AM-toxins are cyclic depsipeptides containing the 3 residues 2-hydroxy-isovaleric acid (2-HIV), dehydroalanine, L-alanine which are common for all 3 AM-toxins I to III. The fourth precursor is L-alpha-amino-methoxyphenyl-valeric acid (L-Amv) for AM-toxin I, L-alpha-amino-phenyl-valeric acid (L-Apv) for AM-toxin II, and L-alpha-amino-hydroxyphenyl-valeric acid (L-Ahv) for AM-toxin III. AM-toxins have two target sites for affecting susceptible apple cells; they cause invagination of the plasma membrane and electrolyte loss and chloroplast disorganization. The non-ribosomal peptide synthetase AMT1 contains 4 catalytic modules and is responsible for activation of each residue in AM-toxin. The aldo-keto reductase AMT2 catalyzes the conversion of 2-keto-isovaleric acid (2-KIV) to 2-hydroxy-isovaleric acid (2-HIV), one of the precursor residues incorporated by AMT1 during AM-toxin biosynthesis, by reduction of its ketone to an alcohol. The cytochrome P450 monooxygenase AMT3 and the thioesterase AMT4 are also important for AM-toxin production, but their exact function within the AM-toxin biosynthesis are not known yet. Up to 21 proteins (including AMT1 to AMT4) are predicted to be involved in AM-toxin biosynthesis since their expression ishighly up-regulated in AM-toxin-producing cultures. The protein is Nonribosomal peptide synthetase AMT10 of Alternaria alternata (Alternaria rot fungus).